The sequence spans 436 residues: Trigger factor (436 aa).

Positions 163–248 constitute a PPIase FKBP-type domain; that stretch reads DDRIVLDFAG…VKEVAEAVLP (86 aa).

It belongs to the FKBP-type PPIase family. Tig subfamily.

Its subcellular location is the cytoplasm. It catalyses the reaction [protein]-peptidylproline (omega=180) = [protein]-peptidylproline (omega=0). Involved in protein export. Acts as a chaperone by maintaining the newly synthesized protein in an open conformation. Functions as a peptidyl-prolyl cis-trans isomerase. In Bordetella avium (strain 197N), this protein is Trigger factor.